A 127-amino-acid chain; its full sequence is MRRNSKERKNRATRRSQGSYQEIIGRTWIFRGAHRGRVTRRNIIWHELIGLRVRIVGSTHPAFVGIEGYVIDETRNMLVIAGDRIWKVPKDVCIFEFEADDGTKIKIPGERLVGRPEMRLKKRWKKW.

Belongs to the eukaryotic/archaeal RNase P protein component 1 family. As to quaternary structure, consists of a catalytic RNA component and at least 5 protein subunits. Forms a heterodimeric subcomplex with Rnp4. Reconstituted enzyme missing individual protein subunits is suboptimally active, showing each subunit contributes to optimization of activity.

Its subcellular location is the cytoplasm. It catalyses the reaction Endonucleolytic cleavage of RNA, removing 5'-extranucleotides from tRNA precursor.. Functionally, part of ribonuclease P (RNase P), a protein complex that generates mature tRNA molecules by cleaving their 5'-ends. Binds RNase P RNA. The protein is Ribonuclease P protein component 1 of Pyrococcus horikoshii (strain ATCC 700860 / DSM 12428 / JCM 9974 / NBRC 100139 / OT-3).